The primary structure comprises 273 residues: Serine acetyltransferase (273 aa).

Belongs to the transferase hexapeptide repeat family. In terms of assembly, part of the cysteine synthase complex formed at a ratio of 1 copy of this protein and 2 copies of O-acetylserine sulfhydrylase (cysK). The complex reversibly dissociates in the presence of O-acetyl-L-serine in the absence of hydrogen sulfide.

It is found in the cytoplasm. It carries out the reaction L-serine + acetyl-CoA = O-acetyl-L-serine + CoA. The protein operates within amino-acid biosynthesis; L-cysteine biosynthesis; L-cysteine from L-serine: step 1/2. With respect to regulation, sensitive to feedback inhibition by L-cysteine. The polypeptide is Serine acetyltransferase (cysE) (Salmonella typhimurium (strain LT2 / SGSC1412 / ATCC 700720)).